A 154-amino-acid polypeptide reads, in one-letter code: RxLR effector protein PexRD24 (154 aa).

The signal sequence occupies residues 1-22 (MHSSLLWLGAVVALLAVNNVTA). The RxLR-dEER signature appears at 53–67 (RSLRAVETSEDEEER). Lys-138 is a short sequence motif (PP1c-binding motif).

Belongs to the RxLR effector family. Interacts with the potato PP1c family proteins PP1c-1, PP1c-2 and PP1c-3.

Its subcellular location is the secreted. The protein localises to the host nucleus. It is found in the host nucleoplasm. It localises to the host nucleolus. Functionally, effector that interacts with isoforms of host protein phosphatase type 1c (PP1c), mimicking a regulatory subunit and causing their re-localization within the host nucleus. The holoenzymes formed with PP1c isoforms act to promote late blight by attenuating jasmonic acid (JA)- and salicylic acid (SA)-mediated transcriptional responses of the host plant. In Phytophthora infestans (strain T30-4) (Potato late blight agent), this protein is RxLR effector protein PexRD24.